Reading from the N-terminus, the 1206-residue chain is MIDVNNFHYMKIGLASPEKIRSWSYGEVKKPETINYRTLKPEKDGLFCERIFGPTKDWECSCGKYKRVRYKGMVCDRCGVEVTKSKVRRERMGHIELAAPVSHIWYFKGIPSRMGLLLDMSPRALEEVIYFASYVVVDPGPTGLEKKSLLSEAEFREYYDKYPGQFVAKMGAEGIKDLLEEINLDEELKSLRDELESATGQRLTRAIKRLEVVESFRNSGNNPAWMILDVLPIIPPEIRPMVQLDGGRFATSDLNDLYRRVINRNNRLKRLLDLGAPGIIVQNEKRMLQEAVDALIDNGRRGRPVTGPGNRPLKSLSHMLKGKQGRFRQNLLGKRVDYSGRSVIAVGPSLKMYQCGLPKEMALELFKPFVMKELVQREIATNIKNAKSKIERMDDEVWDVLEDVIREHPVLLNRAPTLHRLGIQAFEPTLVEGRAIRLHPLVTTAYNADFDGDQMAVHVPLSKEAQAEARMLMLAAQNILNPKDGKPVVTPSQDMVLGNYYLTLERKDAMNTGTIFNDTNEVLKAYANGYVHLHTRIGVHAKSFNNPTFTEAQNNKILATSVGKVIFNEIIPDSFAFINEPSQTNLEGKTPDKYFIDSTQLGEGGLKAYFEEQELIEPFNKKFLGNIIAEVFNRFSITDTSMMLDRMKDLGFKFSSKAGITVGVADIVVLPDKQDILDEHEKLVERVSKQFNRGLITEDERYNAVVEIWTDAKDQIQGELMQSLEKTNPIFMMSDSGARGNASNFTQLAGMRGLMAAPSGKIIELPITSSFREGLTVLEYFISTHGARKGLADTALKTADSGYLTRRLVDVAQDVIVREEDCGTDRGLLVSDIKEGTEMIEPFIERIEGRYSKETIRHPETDEIIIRPDELITAEIAKKITDAGIEQMYIRSAFTCNTRHGVCEKCYGKNLATGEKVEVGEAVGTIAAQSIGEPGTQLTMRTFHTGGVAGSDITQGLPRIQEIFEARNPKGQAVITEIEGVVEDIKLAKDRQQEIVVKGANETRSYLASGTSRLKVEVGQSVERGEVLTEGSIEPKNFLAVAGLNATESYLLKEVQKVYRMQGVEIDDKHVEVMVRQMLRKVRIIEAGDTKLLPGSLVDIHSFTDANREAFKERKRPATAKPVLLGITKASLETESFLSAASFQETTRVLTDAAIKGKRDDLLGLKENVIIGKLIPAGTGMRRYSDVKYDKAETPVTETEEAEIIE.

Residues Cys60, Cys62, Cys75, and Cys78 each coordinate Zn(2+). Positions 449, 451, and 453 each coordinate Mg(2+). The Zn(2+) site is built by Cys822, Cys896, Cys903, and Cys906.

This sequence belongs to the RNA polymerase beta' chain family. In terms of assembly, the RNAP catalytic core consists of 2 alpha, 1 beta, 1 beta' and 1 omega subunit. When a sigma factor is associated with the core the holoenzyme is formed, which can initiate transcription. Mg(2+) serves as cofactor. Zn(2+) is required as a cofactor.

It carries out the reaction RNA(n) + a ribonucleoside 5'-triphosphate = RNA(n+1) + diphosphate. DNA-dependent RNA polymerase catalyzes the transcription of DNA into RNA using the four ribonucleoside triphosphates as substrates. In Staphylococcus haemolyticus (strain JCSC1435), this protein is DNA-directed RNA polymerase subunit beta'.